The primary structure comprises 290 residues: PIH1 domain-containing protein 1 (290 aa).

Ser12, Ser16, and Ser173 each carry phosphoserine.

This sequence belongs to the PIH1 family. Component of the R2TP complex composed at least of RUVBL1, RUVBL2, RPAP3 and PIHD1. Component of the PAQosome complex which is responsible for the biogenesis of several protein complexes and which consists of R2TP complex members RUVBL1, RUVBL2, RPAP3 and PIH1D1, URI complex members PFDN2, PFDN6, PDRG1, UXT and URI1 as well as ASDURF, POLR2E and DNAAF10/WDR92. Interacts with phosphorylated TELO2. Mediates interaction of TELO2 with the R2TP complex. Interacts with phosphorylated ECD, EFTUD2/SNRP116, RPB1 and UBR5 and with RPB1 in a phosphorylation-independent manner. Interacts with the core C/D box snoRNP particle components NOP58 and FBL and with RUVBL1/TIP49. Interacts with RPAP3 and DNAAF10. Interacts with histone H4 and with SWI/SNF complex member SMARCB1/SNF5. Interacts with the mTORC1 complex member RPTOR. Interacts with isoform 1 of MSL1.

It is found in the nucleus. Its function is as follows. Involved in the assembly of C/D box small nucleolar ribonucleoprotein (snoRNP) particles. Recruits the SWI/SNF complex to the core promoter of rRNA genes and enhances pre-rRNA transcription. Mediates interaction of TELO2 with the R2TP complex which is necessary for the stability of MTOR and SMG1. Positively regulates the assembly and activity of the mTORC1 complex. The protein is PIH1 domain-containing protein 1 (Pih1d1) of Mus musculus (Mouse).